The chain runs to 505 residues: tRNA (guanine(6)-N(2))-methyltransferase THUMP3 (505 aa).

Residues 145–182 (KAKRRKANQSAGKEKADCGQGDKADEKDGKKKHASSTS) are disordered. The span at 156 to 173 (GKEKADCGQGDKADEKDG) shows a compositional bias: basic and acidic residues. Residues 171 to 287 (KDGKKKHASS…DNEVIVAIAL (117 aa)) enclose the THUMP domain.

Belongs to the methyltransferase superfamily. In terms of assembly, part of the heterodimeric THUMPD3-TRM112 methyltransferase complex; this complex forms an active tRNA methyltransferase, where TRMT112 acts as an activator of the catalytic subunit THUMPD3. In terms of tissue distribution, ubiquitously expressed. Abundantly expressed in the testis, also expressed in the brain, heart, kidney, liver, lung, muscle and spleen.

The protein localises to the cytoplasm. The catalysed reaction is guanosine(6) in tRNA + S-adenosyl-L-methionine = N(2)-methylguanosine(6) in tRNA + S-adenosyl-L-homocysteine + H(+). It carries out the reaction guanosine(7) in tRNA + S-adenosyl-L-methionine = N(2)-methylguanosine(7) in tRNA + S-adenosyl-L-homocysteine + H(+). Its function is as follows. Catalytic subunit of the THUMPD3-TRM112 methyltransferase complex, that specifically mediates the S-adenosyl-L-methionine-dependent N(2)-methylation of guanosine nucleotide at position 6 (m2G6) in tRNAs. This is one of the major tRNA (guanine-N(2))-methyltransferases. Also catalyzes the S-adenosyl-L-methionine-dependent N(2)-methylation of guanosine nucleotide at position 7 of tRNA(Trp). The chain is tRNA (guanine(6)-N(2))-methyltransferase THUMP3 from Mus musculus (Mouse).